We begin with the raw amino-acid sequence, 342 residues long: Phosphate acyltransferase (342 aa).

Belongs to the PlsX family. Homodimer. Probably interacts with PlsY.

Its subcellular location is the cytoplasm. It carries out the reaction a fatty acyl-[ACP] + phosphate = an acyl phosphate + holo-[ACP]. It participates in lipid metabolism; phospholipid metabolism. In terms of biological role, catalyzes the reversible formation of acyl-phosphate (acyl-PO(4)) from acyl-[acyl-carrier-protein] (acyl-ACP). This enzyme utilizes acyl-ACP as fatty acyl donor, but not acyl-CoA. In Actinobacillus succinogenes (strain ATCC 55618 / DSM 22257 / CCUG 43843 / 130Z), this protein is Phosphate acyltransferase.